The primary structure comprises 491 residues: Protein DETOXIFICATION 28 (491 aa).

12 consecutive transmembrane segments (helical) span residues 47–67 (IVGP…ITQA), 77–97 (LAAI…LFIG), 127–147 (IVLF…TPIL), 160–180 (SGII…FFPI), 192–212 (VIAI…WLFV), 228–248 (VSWW…GCPL), 272–292 (GIMV…TGNL), 302–322 (MSIC…FFAG), 352–372 (IIGI…GWMF), 387–407 (ILLS…GVAV), 414–434 (LVAF…GIVM), and 444–464 (GIWA…LIFI).

This sequence belongs to the multi antimicrobial extrusion (MATE) (TC 2.A.66.1) family.

It is found in the membrane. In Arabidopsis thaliana (Mouse-ear cress), this protein is Protein DETOXIFICATION 28.